The sequence spans 300 residues: 4-hydroxy-tetrahydrodipicolinate synthase (300 aa).

T49 is a pyruvate binding site. The active-site Proton donor/acceptor is the Y137. The active-site Schiff-base intermediate with substrate is K165. Pyruvate is bound at residue I207.

The protein belongs to the DapA family. In terms of assembly, homotetramer; dimer of dimers.

It is found in the cytoplasm. The enzyme catalyses L-aspartate 4-semialdehyde + pyruvate = (2S,4S)-4-hydroxy-2,3,4,5-tetrahydrodipicolinate + H2O + H(+). The protein operates within amino-acid biosynthesis; L-lysine biosynthesis via DAP pathway; (S)-tetrahydrodipicolinate from L-aspartate: step 3/4. Catalyzes the condensation of (S)-aspartate-beta-semialdehyde [(S)-ASA] and pyruvate to 4-hydroxy-tetrahydrodipicolinate (HTPA). This Nitrosospira multiformis (strain ATCC 25196 / NCIMB 11849 / C 71) protein is 4-hydroxy-tetrahydrodipicolinate synthase.